A 515-amino-acid polypeptide reads, in one-letter code: 1-pyrroline-5-carboxylate dehydrogenase 2 (515 aa).

Catalysis depends on residues E286 and C320.

This sequence belongs to the aldehyde dehydrogenase family. RocA subfamily.

It carries out the reaction L-glutamate 5-semialdehyde + NAD(+) + H2O = L-glutamate + NADH + 2 H(+). It functions in the pathway amino-acid degradation; L-proline degradation into L-glutamate; L-glutamate from L-proline: step 2/2. Its function is as follows. Important for the use of proline as a sole carbon and energy source or a sole nitrogen source. This Bacillus subtilis (strain 168) protein is 1-pyrroline-5-carboxylate dehydrogenase 2.